The primary structure comprises 122 residues: uncharacterized protein (122 aa).

A signal peptide spans 1-28 (MVPGPPESVVRFFLWFCFLLPPTRKASC). N-linked (GlcNAc...) asparagine glycosylation is present at asparagine 49.

The protein localises to the secreted. This is an uncharacterized protein from Homo sapiens (Human).